The primary structure comprises 723 residues: Homeobox protein HAT3.1 (723 aa).

Basic residues predominate over residues 1-10; it reads MYKAVSKRVT. Disordered regions lie at residues 1–94 and 135–173; these read MYKA…GSHR and KRAQRSKEDAGPSSVVANSTPVGRPKKKNKTMNKGQVRE. Polar residues predominate over residues 11-23; it reads RSSGSGLKQTNVD. Residues 58-83 show a composition bias toward basic and acidic residues; the sequence is LHHEIMDHGKGNEEQKPTPQTVKKDS. Residues 265–322 form a PHD-type zinc finger; sequence DIFCAKCGSKDLSVDNDIILCDGFCDRGFHQYCLEPPLRKEDIPPDDEGWLCPGCDCK. 2 disordered regions span residues 357 to 628 and 680 to 723; these read GGQN…KTQR and VEKL…RRRK. The segment covering 365–407 has biased composition (acidic residues); sequence LPSDDSDDEEYDPDCLNDNENDEDGSDDNEESENEDGSSDETE. Positions 417–427 are enriched in basic and acidic residues; that stretch reads ESFKEGKDIMK. Acidic residues predominate over residues 435-453; sequence DDSEDDDYDPDAPTCDDDK. Basic and acidic residues-rich tracts occupy residues 518–530 and 547–556; these read RNVERLDYKKLYD and DKTARMGKED. Over residues 580-589 the composition is skewed to basic residues; it reads KKLIRKSKRA. A DNA-binding region (homeobox) is located at residues 614 to 673; sequence SSSSACKQTDPKTQRLYISFQENQYPDKATKESLAKELQMTVKQVNNWFKHRRWSINSKP. The span at 680–690 shows a compositional bias: basic and acidic residues; it reads VEKLKTGKEGE. Positions 695–705 are enriched in polar residues; the sequence is VAGSSKQTMET.

The protein belongs to the PHD-associated homeobox family. Primarily detected in root tissue.

The protein resides in the nucleus. Functionally, binds only to large DNA fragments. Recognizes a DNA fragment carrying 8 copies of box7 motif of the light-induced cab-E promoter of Nicotiana plumbaginifolia. Also recognizes the box7m1 motif. The chain is Homeobox protein HAT3.1 (HAT3.1) from Arabidopsis thaliana (Mouse-ear cress).